The chain runs to 360 residues: DNA replication and repair protein RecF (360 aa).

Residue 30-37 coordinates ATP; that stretch reads GHNGSGKT.

It belongs to the RecF family.

It is found in the cytoplasm. In terms of biological role, the RecF protein is involved in DNA metabolism; it is required for DNA replication and normal SOS inducibility. RecF binds preferentially to single-stranded, linear DNA. It also seems to bind ATP. In Actinobacillus pleuropneumoniae serotype 7 (strain AP76), this protein is DNA replication and repair protein RecF.